Here is a 59-residue protein sequence, read N- to C-terminus: UPF0434 protein lpg1920 (59 aa).

The protein belongs to the UPF0434 family.

The sequence is that of UPF0434 protein lpg1920 from Legionella pneumophila subsp. pneumophila (strain Philadelphia 1 / ATCC 33152 / DSM 7513).